Consider the following 343-residue polypeptide: S-adenosylmethionine:tRNA ribosyltransferase-isomerase (343 aa).

The protein belongs to the QueA family. Monomer.

It localises to the cytoplasm. The catalysed reaction is 7-aminomethyl-7-carbaguanosine(34) in tRNA + S-adenosyl-L-methionine = epoxyqueuosine(34) in tRNA + adenine + L-methionine + 2 H(+). It functions in the pathway tRNA modification; tRNA-queuosine biosynthesis. Its function is as follows. Transfers and isomerizes the ribose moiety from AdoMet to the 7-aminomethyl group of 7-deazaguanine (preQ1-tRNA) to give epoxyqueuosine (oQ-tRNA). The sequence is that of S-adenosylmethionine:tRNA ribosyltransferase-isomerase from Pelobacter propionicus (strain DSM 2379 / NBRC 103807 / OttBd1).